The sequence spans 227 residues: PKHD-type hydroxylase Bpro_3048 (227 aa).

Residues 78-179 (KIFTPRINRY…RLACFFWVES (102 aa)) enclose the Fe2OG dioxygenase domain. The Fe cation site is built by H97, D99, and H160. R170 serves as a coordination point for 2-oxoglutarate.

The cofactor is Fe(2+). L-ascorbate serves as cofactor.

The polypeptide is PKHD-type hydroxylase Bpro_3048 (Polaromonas sp. (strain JS666 / ATCC BAA-500)).